The chain runs to 61 residues: Lens epithelial cell protein LEP503 (61 aa).

In Mus musculus (Mouse), this protein is Lens epithelial cell protein LEP503 (Lenep).